The chain runs to 1381 residues: DNA-directed RNA polymerase subunit beta'' (1381 aa).

Cys224, Cys296, Cys303, and Cys306 together coordinate Zn(2+).

Belongs to the RNA polymerase beta' chain family. RpoC2 subfamily. As to quaternary structure, in plastids the minimal PEP RNA polymerase catalytic core is composed of four subunits: alpha, beta, beta', and beta''. When a (nuclear-encoded) sigma factor is associated with the core the holoenzyme is formed, which can initiate transcription. Zn(2+) serves as cofactor.

It localises to the plastid. Its subcellular location is the chloroplast. The enzyme catalyses RNA(n) + a ribonucleoside 5'-triphosphate = RNA(n+1) + diphosphate. DNA-dependent RNA polymerase catalyzes the transcription of DNA into RNA using the four ribonucleoside triphosphates as substrates. The sequence is that of DNA-directed RNA polymerase subunit beta'' from Drimys granadensis.